A 344-amino-acid chain; its full sequence is Type VI secretion system component TssA1 (344 aa).

In terms of assembly, homododecamer. Interacts with TssB1 and TssC1. Interacts with TssK1 and TssF1.

In terms of biological role, core component of the H1 type VI (H1-T6SS) secretion system that plays a role in the release of toxins targeting both eukaryotic and prokaryotic species. Forms a dodecameric ring-shaped structure located at one end of the T6SS sheath. May properly attach the pre-assembled sheath onto the baseplate and/or stabilize the sheaths tubular structure. The polypeptide is Type VI secretion system component TssA1 (Pseudomonas aeruginosa (strain ATCC 15692 / DSM 22644 / CIP 104116 / JCM 14847 / LMG 12228 / 1C / PRS 101 / PAO1)).